Here is a 691-residue protein sequence, read N- to C-terminus: Threonine--tRNA ligase (691 aa).

Residues methionine 1–threonine 66 enclose the TGS domain. The segment at aspartate 265–proline 571 is catalytic. Positions 370, 421, and 548 each coordinate Zn(2+).

This sequence belongs to the class-II aminoacyl-tRNA synthetase family. As to quaternary structure, homodimer. Zn(2+) serves as cofactor.

It localises to the cytoplasm. It carries out the reaction tRNA(Thr) + L-threonine + ATP = L-threonyl-tRNA(Thr) + AMP + diphosphate + H(+). Catalyzes the attachment of threonine to tRNA(Thr) in a two-step reaction: L-threonine is first activated by ATP to form Thr-AMP and then transferred to the acceptor end of tRNA(Thr). Also edits incorrectly charged L-seryl-tRNA(Thr). This Mycolicibacterium vanbaalenii (strain DSM 7251 / JCM 13017 / BCRC 16820 / KCTC 9966 / NRRL B-24157 / PYR-1) (Mycobacterium vanbaalenii) protein is Threonine--tRNA ligase.